A 774-amino-acid polypeptide reads, in one-letter code: Potassium/sodium hyperpolarization-activated cyclic nucleotide-gated channel 3 (774 aa).

Positions 1–48 are disordered; sequence MEAEQRPAAGASEGATPGLEAVPPVAPPPATAASGPIPKSGPEPKRRH. The Cytoplasmic portion of the chain corresponds to 1–97; sequence MEAEQRPAAG…PYSDFRFYWD (97 aa). The segment at 46-91 is involved in subunit assembly; that stretch reads RRHLGTLLQPTVNKFSLRVFGSHKAVEIEQERVKSAGAWIIHPYSD. Residues 98 to 118 traverse the membrane as a helical segment; it reads LIMLLLMVGNLIVLPVGITFF. Residues 119–124 lie on the Extracellular side of the membrane; the sequence is KEENSP. Residues 125 to 145 traverse the membrane as a helical segment; it reads PWIVFNVLSDTFFLLDLVLNF. Residues 146-171 lie on the Cytoplasmic side of the membrane; sequence RTGIVVEEGAEILLAPRAIRTRYLRT. A helical membrane pass occupies residues 172 to 192; the sequence is WFLVDLISSIPVDYIFLVVEL. The Extracellular segment spans residues 193 to 201; sequence EPRLDAEVY. Residues 202–222 form a helical; Voltage-sensor membrane-spanning segment; sequence KTARALRIVRFTKILSLLRLL. Residues 223–253 are Cytoplasmic-facing; that stretch reads RLSRLIRYIHQWEEIFHMTYDLASAVVRIFN. Residues 254-274 traverse the membrane as a helical segment; it reads LIGMMLLLCHWDGCLQFLVPM. The Extracellular segment spans residues 275 to 297; that stretch reads LQDFPPDCWVSINHMVNHSWGRQ. The N-linked (GlcNAc...) asparagine glycan is linked to asparagine 291. The pore-forming intramembrane region spans 298 to 319; it reads YSHALFKAMSHMLCIGYGQQAP. Residues 320-329 lie on the Extracellular side of the membrane; it reads VGMPDVWLTM. The helical transmembrane segment at 330–350 threads the bilayer; sequence LSMIVGATCYAMFIGHATALI. Topologically, residues 351 to 774 are cytoplasmic; that stretch reads QSLDSSRRQY…PRGLQLSANM (424 aa). The tract at residues 354–774 is interaction with KCTD3; sequence DSSRRQYQEK…PRGLQLSANM (421 aa). 3',5'-cyclic AMP-binding residues include glycine 492, glutamate 493, cysteine 495, arginine 502, threonine 503, arginine 543, and arginine 546. At serine 634 the chain carries Phosphoserine. The disordered stretch occupies residues 682-774; the sequence is SLSRAGRSQV…PRGLQLSANM (93 aa). Residues 751 to 763 show a composition bias toward pro residues; the sequence is TAQPPRPPVPEPA.

This sequence belongs to the potassium channel HCN family. As to quaternary structure, homotetramer. The potassium channel is composed of a homo- or heterotetrameric complex of pore-forming subunits. Interacts with HCN11. Interacts with KCTD3; this interaction increases cell surface expression and current density of this channel. Interacts with PEX5L. As to expression, detected in brain.

The protein localises to the cell membrane. The catalysed reaction is K(+)(in) = K(+)(out). It catalyses the reaction Na(+)(in) = Na(+)(out). Unlike HCN2 and HCN4, HCN3 is insensitive to cyclic nucleotides, such as cAMP or cGMP. This lack of sensitivity of HCN3, despite harboring a functional cyclic nucleotide-binding domain (CNBD), may be explained by its shorter C-terminal sequence, which may alter the normal autoinhibition of the channel. Inhibited by Cs(1+) and ZD7288. Phosphatidylinositol-4,5-bisphosphate (PIP(2)) shifts HCN3 activation to more depolarized potentials and accelerated activation kinetics. In terms of biological role, hyperpolarization-activated ion channel that are permeable to sodium and potassium ions, with an about 3:1 preference for potassium ions. Contributes to the native pacemaker currents in heart (If) and in neurons (Ih). In particular, plays a pivotal role in maintaining excitability and promoting rhythmic burst firing within hypothalamic nuclei. Exerts a significant influence on the configuration of the cardiac action potential waveform. Does not appear to play a prominent role in the processing of acute, neuropathic, or inflammatory pain. The sequence is that of Potassium/sodium hyperpolarization-activated cyclic nucleotide-gated channel 3 (HCN3) from Homo sapiens (Human).